Here is a 150-residue protein sequence, read N- to C-terminus: Interferon antagonist OPG027 (150 aa).

This sequence belongs to the orthopoxvirus OPG027 family.

Functionally, inhibits antiviral activity induced by type I interferons. Does not block signal transduction of IFN, but is important to counteract the host antiviral state induced by a pre-treatment with IFN. In Homo sapiens (Human), this protein is Interferon antagonist OPG027 (OPG027).